Consider the following 324-residue polypeptide: Phospho-N-acetylmuramoyl-pentapeptide-transferase (324 aa).

9 helical membrane passes run 13 to 33 (VLSA…IFIP), 59 to 79 (PTMG…IIGY), 85 to 105 (GMVV…DDIL), 121 to 141 (MILL…NIGT), 143 to 163 (IIIP…PLVV), 179 to 199 (IDGL…IVGF), 201 to 221 (TGHY…LGFL), 243 to 263 (AIAT…VGGI), and 303 to 323 (VKLV…GFIA).

This sequence belongs to the glycosyltransferase 4 family. MraY subfamily. Requires Mg(2+) as cofactor.

Its subcellular location is the cell membrane. It carries out the reaction UDP-N-acetyl-alpha-D-muramoyl-L-alanyl-gamma-D-glutamyl-meso-2,6-diaminopimeloyl-D-alanyl-D-alanine + di-trans,octa-cis-undecaprenyl phosphate = di-trans,octa-cis-undecaprenyl diphospho-N-acetyl-alpha-D-muramoyl-L-alanyl-D-glutamyl-meso-2,6-diaminopimeloyl-D-alanyl-D-alanine + UMP. Its pathway is cell wall biogenesis; peptidoglycan biosynthesis. Catalyzes the initial step of the lipid cycle reactions in the biosynthesis of the cell wall peptidoglycan: transfers peptidoglycan precursor phospho-MurNAc-pentapeptide from UDP-MurNAc-pentapeptide onto the lipid carrier undecaprenyl phosphate, yielding undecaprenyl-pyrophosphoryl-MurNAc-pentapeptide, known as lipid I. The chain is Phospho-N-acetylmuramoyl-pentapeptide-transferase from Clostridium botulinum (strain Alaska E43 / Type E3).